We begin with the raw amino-acid sequence, 84 residues long: Small ribosomal subunit protein uS17 (84 aa).

This sequence belongs to the universal ribosomal protein uS17 family. Part of the 30S ribosomal subunit.

In terms of biological role, one of the primary rRNA binding proteins, it binds specifically to the 5'-end of 16S ribosomal RNA. This is Small ribosomal subunit protein uS17 from Borrelia recurrentis (strain A1).